The sequence spans 144 residues: Large ribosomal subunit protein uL15 (144 aa).

The tract at residues 1-58 (MKLNTLSPAAGAKHAAKRVGRGIGSGLGKTAGRGHKGQKSRSGGSIRPGFEGGQMPLK) is disordered. A compositionally biased stretch (gly residues) spans 21 to 31 (RGIGSGLGKTA).

This sequence belongs to the universal ribosomal protein uL15 family. Part of the 50S ribosomal subunit.

In terms of biological role, binds to the 23S rRNA. In Psychromonas ingrahamii (strain DSM 17664 / CCUG 51855 / 37), this protein is Large ribosomal subunit protein uL15.